A 192-amino-acid chain; its full sequence is Xanthine phosphoribosyltransferase (192 aa).

Leu20 and Asn27 together coordinate xanthine. Residue 128–132 (ANGQA) coordinates 5-phospho-alpha-D-ribose 1-diphosphate. Lys156 is a binding site for xanthine.

The protein belongs to the purine/pyrimidine phosphoribosyltransferase family. Xpt subfamily. Homodimer.

The protein localises to the cytoplasm. The catalysed reaction is XMP + diphosphate = xanthine + 5-phospho-alpha-D-ribose 1-diphosphate. It participates in purine metabolism; XMP biosynthesis via salvage pathway; XMP from xanthine: step 1/1. In terms of biological role, converts the preformed base xanthine, a product of nucleic acid breakdown, to xanthosine 5'-monophosphate (XMP), so it can be reused for RNA or DNA synthesis. The chain is Xanthine phosphoribosyltransferase from Lacticaseibacillus casei (strain BL23) (Lactobacillus casei).